A 622-amino-acid chain; its full sequence is Low affinity potassium transport system protein Kup (622 aa).

Transmembrane regions (helical) follow at residues 9–29, 49–69, 103–123, 137–157, 165–185, 213–233, 247–267, 276–296, 337–357, 363–383, 396–416, and 419–439; these read LPAI…TSPL, VFGF…IKYL, VIMG…TPAI, PQLD…LFMI, VGQL…GLGL, VSFI…ALYA, WFTV…ALLL, PFFL…AALA, IYIP…IVSF, LAAA…ILST, FVAL…TANL, and LLSG…VMTT.

The protein belongs to the HAK/KUP transporter (TC 2.A.72) family.

It is found in the cell inner membrane. The enzyme catalyses K(+)(in) + H(+)(in) = K(+)(out) + H(+)(out). Functionally, responsible for the low-affinity transport of potassium into the cell. Likely operates as a K(+):H(+) symporter. The polypeptide is Low affinity potassium transport system protein Kup (Escherichia coli O6:K15:H31 (strain 536 / UPEC)).